The following is a 193-amino-acid chain: Interleukin-18 (193 aa).

A propeptide spanning residues 1–36 (MAAEPVEDNCINFVAMKFIDNTLYFIAEDDENLESD) is cleaved from the precursor.

This sequence belongs to the IL-1 family. As to quaternary structure, forms a ternary complex with ligand-binding receptor subunit IL18R1 and signaling receptor subunit IL18RAP at the plasma membrane. Mature IL18 first binds to IL18R1 forming a low affinity binary complex, which then interacts with IL18RAP to form a high affinity ternary complex that signals inside the cell. Interacts with cargo receptor TMED10; the interaction mediates the translocation from the cytoplasm into the ERGIC (endoplasmic reticulum-Golgi intermediate compartment) and thereby secretion. Post-translationally, the pro-IL-18 precursor is processed by CASP1, CASP4 or CASP5 to yield its mature, active form. The pro-IL-18 precursor features autoinhibitory interactions between the propeptide and the post-cleavage-site region, preventing recognition by the IL18R1 receptor. Processing by CASP1, CASP4 or CASP5 induces conformational changes to generate critical receptor-binding sites. The mature form is then secreted and released in the extracellular milieu by passing through the gasdermin-D (GSDMD) pore. In contrast, cleavage by CASP3 inactivates IL18. In terms of tissue distribution, expressed in ovarian carcinoma but undetectable in normal ovarian epithelial cells. Resistant to proteolytic activation by caspase-1 and -4.

It localises to the cytoplasm. The protein resides in the cytosol. The protein localises to the secreted. In terms of biological role, pro-inflammatory cytokine primarily involved in epithelial barrier repair, polarized T-helper 1 (Th1) cell and natural killer (NK) cell immune responses. Upon binding to IL18R1 and IL18RAP, forms a signaling ternary complex which activates NF-kappa-B, triggering synthesis of inflammatory mediators. Synergizes with IL12/interleukin-12 to induce IFNG synthesis from T-helper 1 (Th1) cells and natural killer (NK) cells. Involved in transduction of inflammation downstream of pyroptosis: its mature form is specifically released in the extracellular milieu by passing through the gasdermin-D (GSDMD) pore. The protein is Interleukin-18 of Homo sapiens (Human).